The primary structure comprises 463 residues: Chromosomal replication initiator protein DnaA (463 aa).

Residues 1 to 83 (MSTNQIILTD…LQLFQHYNNT (83 aa)) are domain I, interacts with DnaA modulators. The interval 83–124 (TIKSIEIITKELPGTTQTVTELPTKTFADIGSSELNSENIFS) is domain II. A domain III, AAA+ region region spans residues 125–343 (TLDVRFTFDN…GALNKVIAHS (219 aa)). Positions 171, 173, 174, and 175 each coordinate ATP. A domain IV, binds dsDNA region spans residues 344–463 (NFTLKEITLE…INLLMKILQN (120 aa)).

It belongs to the DnaA family. In terms of assembly, oligomerizes as a right-handed, spiral filament on DNA at oriC.

Its subcellular location is the cytoplasm. Functionally, plays an essential role in the initiation and regulation of chromosomal replication. ATP-DnaA binds to the origin of replication (oriC) to initiate formation of the DNA replication initiation complex once per cell cycle. Binds the DnaA box (a 9 base pair repeat at the origin) and separates the double-stranded (ds)DNA. Forms a right-handed helical filament on oriC DNA; dsDNA binds to the exterior of the filament while single-stranded (ss)DNA is stabiized in the filament's interior. The ATP-DnaA-oriC complex binds and stabilizes one strand of the AT-rich DNA unwinding element (DUE), permitting loading of DNA polymerase. After initiation quickly degrades to an ADP-DnaA complex that is not apt for DNA replication. Binds acidic phospholipids. The protein is Chromosomal replication initiator protein DnaA of Rickettsia conorii (strain ATCC VR-613 / Malish 7).